The sequence spans 139 residues: MKKGTVLNSDISSVISRLGHTDTLVVCDAGLPIPKSTTRIDMALTQGVPSFMQVLGVVTNEMQVEAVIIAEEIKQHNPQLHETLLTHLEHLQKHQGNTIEIRYTTHEQFKQQTAESQAVIRSGECSPYANIILCAGVTF.

His20 serves as the catalytic Proton donor. Residues Asp28, His106, and 128 to 130 (YAN) contribute to the substrate site.

The protein belongs to the RbsD / FucU family. RbsD subfamily. Homodecamer.

It localises to the cytoplasm. It carries out the reaction beta-D-ribopyranose = beta-D-ribofuranose. The protein operates within carbohydrate metabolism; D-ribose degradation; D-ribose 5-phosphate from beta-D-ribopyranose: step 1/2. Functionally, catalyzes the interconversion of beta-pyran and beta-furan forms of D-ribose. The sequence is that of D-ribose pyranase from Escherichia coli O127:H6 (strain E2348/69 / EPEC).